The primary structure comprises 193 residues: Xanthine phosphoribosyltransferase (193 aa).

Residues leucine 20 and asparagine 27 each coordinate xanthine. 129–133 serves as a coordination point for 5-phospho-alpha-D-ribose 1-diphosphate; that stretch reads ANGKA. Lysine 157 is a xanthine binding site.

It belongs to the purine/pyrimidine phosphoribosyltransferase family. Xpt subfamily. Homodimer.

Its subcellular location is the cytoplasm. The enzyme catalyses XMP + diphosphate = xanthine + 5-phospho-alpha-D-ribose 1-diphosphate. Its pathway is purine metabolism; XMP biosynthesis via salvage pathway; XMP from xanthine: step 1/1. Its function is as follows. Converts the preformed base xanthine, a product of nucleic acid breakdown, to xanthosine 5'-monophosphate (XMP), so it can be reused for RNA or DNA synthesis. The polypeptide is Xanthine phosphoribosyltransferase (Bifidobacterium longum (strain NCC 2705)).